The sequence spans 663 residues: Meiotically up-regulated gene 60 protein (663 aa).

The region spanning 578–644 (PAEMHFYVPE…SENLWAVRSL (67 aa)) is the KH domain.

The protein resides in the cytoplasm. It is found in the nucleus. The protein localises to the cytoskeleton. Its subcellular location is the microtubule organizing center. It localises to the spindle pole body. In terms of biological role, has a role in meiosis. The sequence is that of Meiotically up-regulated gene 60 protein (mug60) from Schizosaccharomyces pombe (strain 972 / ATCC 24843) (Fission yeast).